The chain runs to 300 residues: Porphobilinogen deaminase (300 aa).

S-(dipyrrolylmethanemethyl)cysteine is present on Cys-239.

This sequence belongs to the HMBS family. As to quaternary structure, monomer. The cofactor is dipyrromethane.

The catalysed reaction is 4 porphobilinogen + H2O = hydroxymethylbilane + 4 NH4(+). The protein operates within porphyrin-containing compound metabolism; protoporphyrin-IX biosynthesis; coproporphyrinogen-III from 5-aminolevulinate: step 2/4. Functionally, tetrapolymerization of the monopyrrole PBG into the hydroxymethylbilane pre-uroporphyrinogen in several discrete steps. The chain is Porphobilinogen deaminase from Francisella tularensis subsp. tularensis (strain WY96-3418).